The sequence spans 353 residues: MSSQDIPEENLPAEQDRPHGAAARPADETNPFADPGLPPHEPRVQDVDERAAKRSERTVALLFTLSMLATIAFIAAFVAIDVDKSVYIFPLGHISALNFALGMTLGVALFAIGAGAVHWARTLMSDEEVADERHPIEASPEVRAKVHADFKQGAKESVIGRRKLIRNTMLGALTLVPLSGVVLLRDLGPLPGTKLRHTLWSKGKLLVNMNTNEPLRPSDVAVGSLTFAMPEGLEEHDEDFQNEIAKAALMIIRLEPDSIKDKRELEWSHEGIVAYSKICTHVGCPISLYEQQTHHALCPCHQSTFDLADGARVIFGPAGHALPQLRIGVNDEGYLEALGDFEEPVGPAYWERG.

The disordered stretch occupies residues 1-51; it reads MSSQDIPEENLPAEQDRPHGAAARPADETNPFADPGLPPHEPRVQDVDERA. Over residues 40-51 the composition is skewed to basic and acidic residues; sequence HEPRVQDVDERA. The next 3 membrane-spanning stretches (helical) occupy residues 60–80, 99–119, and 164–184; these read ALLF…FVAI, FALG…AVHW, and LIRN…VVLL. The region spanning 246-336 is the Rieske domain; it reads KAALMIIRLE…IGVNDEGYLE (91 aa). Cys-279, His-281, Cys-298, and His-301 together coordinate [2Fe-2S] cluster. Cys-284 and Cys-300 are joined by a disulfide.

The protein belongs to the Rieske iron-sulfur protein family. In terms of assembly, the cytochrome bc1 complex is composed of a cytochrome b (QcrB), the Rieske iron-sulfur protein (QcrA) and a diheme cytochrome c (QcrC) subunit. The cofactor is [2Fe-2S] cluster.

Its subcellular location is the cell membrane. Its function is as follows. Iron-sulfur subunit of the cytochrome bc1 complex, an essential component of the respiratory electron transport chain required for ATP synthesis. The bc1 complex catalyzes the oxidation of menaquinol and the reduction of cytochrome c in the respiratory chain. The bc1 complex operates through a Q-cycle mechanism that couples electron transfer to generation of the proton gradient that drives ATP synthesis. The chain is Cytochrome bc1 complex Rieske iron-sulfur subunit (qcrA) from Streptomyces coelicolor (strain ATCC BAA-471 / A3(2) / M145).